The sequence spans 405 residues: Probable tRNA sulfurtransferase (405 aa).

Residues 60–165 (TAVMDRLKGV…LNGVFLSGQT (106 aa)) form the THUMP domain. Residues 183 to 184 (ML), 208 to 209 (HF), arginine 265, glycine 287, and glutamine 296 contribute to the ATP site.

Belongs to the ThiI family.

It is found in the cytoplasm. The enzyme catalyses [ThiI sulfur-carrier protein]-S-sulfanyl-L-cysteine + a uridine in tRNA + 2 reduced [2Fe-2S]-[ferredoxin] + ATP + H(+) = [ThiI sulfur-carrier protein]-L-cysteine + a 4-thiouridine in tRNA + 2 oxidized [2Fe-2S]-[ferredoxin] + AMP + diphosphate. It carries out the reaction [ThiS sulfur-carrier protein]-C-terminal Gly-Gly-AMP + S-sulfanyl-L-cysteinyl-[cysteine desulfurase] + AH2 = [ThiS sulfur-carrier protein]-C-terminal-Gly-aminoethanethioate + L-cysteinyl-[cysteine desulfurase] + A + AMP + 2 H(+). Its pathway is cofactor biosynthesis; thiamine diphosphate biosynthesis. Its function is as follows. Catalyzes the ATP-dependent transfer of a sulfur to tRNA to produce 4-thiouridine in position 8 of tRNAs, which functions as a near-UV photosensor. Also catalyzes the transfer of sulfur to the sulfur carrier protein ThiS, forming ThiS-thiocarboxylate. This is a step in the synthesis of thiazole, in the thiamine biosynthesis pathway. The sulfur is donated as persulfide by IscS. This chain is Probable tRNA sulfurtransferase, found in Levilactobacillus brevis (strain ATCC 367 / BCRC 12310 / CIP 105137 / JCM 1170 / LMG 11437 / NCIMB 947 / NCTC 947) (Lactobacillus brevis).